The sequence spans 492 residues: Differentially expressed in FDCP 8 homolog (492 aa).

Residues 38–51 (GLGGSGSTGSGSEA) are compositionally biased toward gly residues. The segment at 38–62 (GLGGSGSTGSGSEAGGSEESGPQGA) is disordered. 2 Phorbol-ester/DAG-type zinc fingers span residues 161–214 (PHHG…KRVC) and 400–453 (DHIR…NMIC). A disordered region spans residues 468–492 (RMKSTEDDDDDDDGVATDDDVTAAE). Residues 473-492 (EDDDDDDDGVATDDDVTAAE) are compositionally biased toward acidic residues.

The protein belongs to the DEF8 family.

The protein is Differentially expressed in FDCP 8 homolog of Drosophila melanogaster (Fruit fly).